The chain runs to 541 residues: Cytosolic phospholipase A2 gamma (541 aa).

Residues 1 to 541 form the PLA2c domain; sequence MGSSEVSIIP…KDSARSCCLA (541 aa). The Nucleophile role is filled by Ser82. The segment at 260-292 is required for lipid droplet localization; the sequence is LTLKGLWRRAVANAKSIGHLIFARLLRLQESSQ. Ser337 is modified (phosphoserine). Asp385 (proton acceptor) is an active-site residue. Position 538 is a cysteine methyl ester (Cys538). A lipid anchor (S-farnesyl cysteine) is attached at Cys538. Residues 539–541 constitute a propeptide, removed in mature form; the sequence is CLA.

(Microbial infection) Interacts with HCV non-structural protein 4B/NS4B; this interaction likely initiates the recruitment of replication complexes to lipid droplets. Highly expressed in heart and skeletal muscle.

The protein localises to the cell membrane. The protein resides in the endoplasmic reticulum membrane. Its subcellular location is the mitochondrion membrane. It localises to the lipid droplet. The catalysed reaction is a 1,2-diacyl-sn-glycero-3-phosphocholine + H2O = a 1-acyl-sn-glycero-3-phosphocholine + a fatty acid + H(+). The enzyme catalyses a 1-O-alkyl-2-acyl-sn-glycero-3-phosphocholine + H2O = a 1-O-alkyl-sn-glycero-3-phosphocholine + a fatty acid + H(+). It catalyses the reaction 1,2-dihexadecanoyl-sn-glycero-3-phosphocholine + H2O = 1-hexadecanoyl-sn-glycero-3-phosphocholine + hexadecanoate + H(+). It carries out the reaction 1-hexadecanoyl-2-(9Z-octadecenoyl)-sn-glycero-3-phosphocholine + H2O = 1-hexadecanoyl-sn-glycero-3-phosphocholine + (9Z)-octadecenoate + H(+). The catalysed reaction is 1-hexadecanoyl-2-(9Z,12Z-octadecadienoyl)-sn-glycero-3-phosphocholine + H2O = (9Z,12Z)-octadecadienoate + 1-hexadecanoyl-sn-glycero-3-phosphocholine + H(+). The enzyme catalyses 1-hexadecanoyl-2-(5Z,8Z,11Z,14Z-eicosatetraenoyl)-sn-glycero-3-phosphocholine + H2O = 1-hexadecanoyl-sn-glycero-3-phosphocholine + (5Z,8Z,11Z,14Z)-eicosatetraenoate + H(+). It catalyses the reaction 1-O-hexadecyl-2-(5Z,8Z,11Z,14Z)-eicosatetraenoyl-sn-glycero-3-phosphocholine + H2O = 1-O-hexadecyl-sn-glycero-3-phosphocholine + (5Z,8Z,11Z,14Z)-eicosatetraenoate + H(+). It carries out the reaction 1-hexadecanoyl-2-(5Z,8Z,11Z,14Z-eicosatetraenoyl)-sn-glycero-3-phosphocholine + H2O = 2-(5Z,8Z,11Z,14Z)-eicosatetraenoyl-sn-glycero-3-phosphocholine + hexadecanoate + H(+). The catalysed reaction is a 1-acyl-sn-glycero-3-phosphocholine + H2O = sn-glycerol 3-phosphocholine + a fatty acid + H(+). The enzyme catalyses 1-hexadecanoyl-sn-glycero-3-phosphocholine + H2O = sn-glycerol 3-phosphocholine + hexadecanoate + H(+). It catalyses the reaction 2 1-hexadecanoyl-sn-glycero-3-phosphocholine = 1,2-dihexadecanoyl-sn-glycero-3-phosphocholine + sn-glycerol 3-phosphocholine. It carries out the reaction 1-hexadecanoyl-sn-glycero-3-phosphoethanolamine + 1-hexadecanoyl-sn-glycero-3-phosphocholine = 1,2-dihexadecanoyl-sn-glycero-3-phosphoethanolamine + sn-glycerol 3-phosphocholine. The catalysed reaction is 1-hexadecanoyl-sn-glycero-3-phosphoethanolamine + 1-hexadecanoyl-sn-glycero-3-phosphocholine = sn-glycero-3-phosphoethanolamine + 1,2-dihexadecanoyl-sn-glycero-3-phosphocholine. The enzyme catalyses 2 1-hexadecanoyl-sn-glycero-3-phosphoethanolamine = 1,2-dihexadecanoyl-sn-glycero-3-phosphoethanolamine + sn-glycero-3-phosphoethanolamine. It catalyses the reaction 1-O-hexadecyl-sn-glycero-3-phosphocholine + 1-hexadecanoyl-sn-glycero-3-phosphocholine = 1-O-hexadecyl-2-hexadecanoyl-sn-glycero-3-phosphocholine + sn-glycerol 3-phosphocholine. It carries out the reaction a 1-O-(1Z-alkenyl)-sn-glycero-3-phosphoethanolamine + 1-hexadecanoyl-sn-glycero-3-phosphocholine = 1-O-(1Z)-alkenyl-2-hexadecanoyl-sn-glycero-3-phosphoethanolamine + sn-glycerol 3-phosphocholine. The catalysed reaction is 1-O-hexadecyl-sn-glycero-3-phosphocholine + 1-hexadecanoyl-sn-glycero-3-phosphoethanolamine = 1-O-hexadecyl-2-hexadecanoyl-sn-glycero-3-phosphocholine + sn-glycero-3-phosphoethanolamine. The enzyme catalyses 1-octadecanoyl-2-(5Z,8Z,11Z,14Z)-eicosatetraenoyl-sn-glycero-3-phosphoethanolamine + 1-hexadecanoyl-sn-glycero-3-phosphocholine = 1-octadecanoyl-sn-glycero-3-phosphoethanolamine + 1-hexadecanoyl-2-(5Z,8Z,11Z,14Z-eicosatetraenoyl)-sn-glycero-3-phosphocholine. It catalyses the reaction 1-octadecanoyl-2-(5Z,8Z,11Z,14Z)-eicosatetraenoyl-sn-glycero-3-phosphoethanolamine + 1-O-hexadecyl-sn-glycero-3-phosphocholine = 1-octadecanoyl-sn-glycero-3-phosphoethanolamine + 1-O-hexadecyl-2-(5Z,8Z,11Z,14Z)-eicosatetraenoyl-sn-glycero-3-phosphocholine. It carries out the reaction 1-hexadecanoyl-2-(9Z,12Z-octadecadienoyl)-sn-glycero-3-phosphocholine + a 1-O-(1Z-alkenyl)-sn-glycero-3-phosphoethanolamine = 1-O-(1Z-alkenyl)-2-(9Z,12Z-octadecadienoyl)-sn-glycero-3-phosphoethanolamine + 1-hexadecanoyl-sn-glycero-3-phosphocholine. The catalysed reaction is 1-hexadecanoyl-2-(5Z,8Z,11Z,14Z-eicosatetraenoyl)-sn-glycero-3-phosphocholine + a 1-O-(1Z-alkenyl)-sn-glycero-3-phosphoethanolamine = 1-O-(1Z)-alkenyl-2-(5Z,8Z,11Z,14Z)-eicosatetraenoyl-sn-glycero-3-phosphoethanolamine + 1-hexadecanoyl-sn-glycero-3-phosphocholine. With respect to regulation, not regulated by calcium, coenzyme A or ATP. Lysophospholipase activity is inhibited by palmitoyl-CoA. Lysophospholipase and O-acyltransferase activities are inhibited by methylarachidonoylfluorophosphonate. Lysophospholipase activity is inhibited by phosphatidate or lysophosphatidate. O-acyltransferase activity is up-regulated at low concentration (10-20 uM) of phosphatidate or lysophosphatidate, but inhibited at higher concentrations. Functionally, calcium-independent phospholipase, lysophospholipase and O-acyltransferase involved in phospholipid remodeling with implications in endoplasmic reticulum membrane homeostasis and lipid droplet biogenesis. Preferentially hydrolyzes the ester bond of the fatty acyl group attached at the sn-2 position of phospholipids with choline and ethanolamine head groups, producing lysophospholipids that are used in deacylation-reacylation cycles. Transfers the sn-1 fatty acyl from one lysophospholipid molecule to the sn-2 position of another lysophospholipid to form diacyl, alkylacyl and alkenylacyl glycerophospholipids. Cleaves ester bonds but not alkyl or alkenyl ether bonds at sn-1 position of lysophospholipids. Catalyzes sn-2 fatty acyl transfer from phospholipids to the sn-2 position of 1-O-alkyl or 1-O-alkenyl lysophospholipids with lower efficiency. In response to dietary fatty acids, may play a role in the formation of nascent lipid droplets from the endoplasmic reticulum likely by regulating the phospholipid composition of these organelles. Its function is as follows. (Microbial infection) May play a role in replication and assembly of human hepatitis C virus (HCV). In response to HCV infection, promotes remodeling of host endoplasmic reticulum membranes to form organelle-like structures called membranous web, where HCV replication occur. Can further mediate translocation of replication complexes to lipid droplets to enable virion assembly. (Microbial infection) May facilitate human T-lymphotropic virus type 1 (HTLV-1) infection by promoting leukotriene B4 (LTB4) biosynthesis. LTB4 acts as a chemoattractant for HTLV-1-infected CD4-positive T cells and favors cell to cell viral transmission. The chain is Cytosolic phospholipase A2 gamma (PLA2G4C) from Homo sapiens (Human).